The following is a 48-amino-acid chain: Large ribosomal subunit protein bL32 (48 aa).

The segment covering 1–20 (MAVPKRRVSKTRAAKRRTHY) has biased composition (basic residues). Positions 1 to 48 (MAVPKRRVSKTRAAKRRTHYKVSLPMPIKDKDGSYKMPHRANPTTKEY) are disordered.

The protein belongs to the bacterial ribosomal protein bL32 family.

This chain is Large ribosomal subunit protein bL32 (rpmF), found in Campylobacter jejuni subsp. jejuni serotype O:2 (strain ATCC 700819 / NCTC 11168).